The chain runs to 225 residues: Probable polyketide biosynthesis zinc-dependent hydrolase BaeB (225 aa).

His62, His64, Asp66, His67, His123, Asp140, and His181 together coordinate Zn(2+).

This sequence belongs to the metallo-beta-lactamase superfamily. Requires Zn(2+) as cofactor.

The protein resides in the cytoplasm. The protein operates within antibiotic biosynthesis; bacillaene biosynthesis. Functionally, probably involved in some intermediate steps for the synthesis of the antibiotic polyketide bacillaene which is involved in secondary metabolism. The chain is Probable polyketide biosynthesis zinc-dependent hydrolase BaeB (baeB) from Bacillus velezensis (strain DSM 23117 / BGSC 10A6 / LMG 26770 / FZB42) (Bacillus amyloliquefaciens subsp. plantarum).